The primary structure comprises 630 residues: Coiled-coil domain-containing protein 120 (630 aa).

Positions R31–E70 are involved in CYTH2-binding. Residues E109–L173 adopt a coiled-coil conformation. 2 stretches are compositionally biased toward low complexity: residues H212–G222 and A282–S297. Disordered regions lie at residues H212–R435 and G457–L534. Positions R326–Q335 are enriched in polar residues. Residues S358 and S360 each carry the phosphoserine modification. Residues A421–P434 are compositionally biased toward low complexity. Omega-N-methylarginine is present on R435.

As to quaternary structure, interacts with NIN and CEP170; leading to recruit them to centrosomes. Directly interacts with CYTH2; this interaction stabilizes CCDC120, possibly by preventing ubiquitination. In terms of processing, ubiquitinated; interaction with CYTH2 may prevent ubiquitination.

Its subcellular location is the cytoplasm. It localises to the cytoskeleton. It is found in the microtubule organizing center. The protein localises to the centrosome. The protein resides in the centriole. Its subcellular location is the cell projection. It localises to the neuron projection. It is found in the growth cone. The protein localises to the endosome. Its function is as follows. Centriolar protein required for centriole subdistal appendage assembly and microtubule anchoring in interphase cells. Together with CCDC68, cooperate with subdistal appendage components ODF2, NIN and CEP170 for hierarchical subdistal appendage assembly. Recruits NIN and CEP170 to centrosomes. Also required for neurite growth. Localizes CYTH2 to vesicles to allow its transport along neurites, and subsequent ARF6 activation and neurite growth. This chain is Coiled-coil domain-containing protein 120 (CCDC120), found in Homo sapiens (Human).